Here is a 773-residue protein sequence, read N- to C-terminus: Beta-hexosaminidase B (773 aa).

The signal sequence occupies residues 1–19; the sequence is MKFNRLMALLFGVSSPLYA. 3 cysteine pairs are disulfide-bonded: Cys46-Cys53, Cys389-Cys397, and Cys496-Cys542. Catalysis depends on Glu531, which acts as the Proton donor.

The protein belongs to the glycosyl hydrolase 20 family.

The catalysed reaction is Hydrolysis of terminal non-reducing N-acetyl-D-hexosamine residues in N-acetyl-beta-D-hexosaminides.. The chain is Beta-hexosaminidase B (nag096) from Pseudoalteromonas piscicida.